A 322-amino-acid polypeptide reads, in one-letter code: MAASSSLVPDRLRLPLCFLGVFVCYFYYGILQEKITRGKYGEGAKQETFTFALTLVFIQCVVNAVFAKILIQFFDTARVDRTRSWLYAACSVSYLGAMVSSNSALQFVNYPTQVLGKSCKPIPVMLLGVTLLKKKYPMAKYLCVLLIVAGVALFMYKPKKVVGIEEHTIGYGELLLLLSLTLDGLTGVSQDHMRAHYQTGSNHMMLNINLWSTLLLGAGILFTGELWEFLSFAERYPTIVYNILLFGLTSALGQSFIFMTVVYFGPLTCSIITTTRKFFTILASVILFANPISPMQWVGTVLVFLGLGLDAKFGKGAKKTSH.

Transmembrane regions (helical) follow at residues 12 to 32 (LRLP…GILQ), 51 to 71 (FALT…KILI), 85 to 105 (WLYA…NSAL), 136 to 156 (YPMA…LFMY), 168 to 188 (TIGY…LTGV), 210 to 230 (LWST…WEFL), 243 to 263 (ILLF…TVVY), and 285 to 305 (VILF…LVFL). Positions 318–322 (KKTSH) match the Di-lysine motif motif.

The protein belongs to the nucleotide-sugar transporter family. SLC35B subfamily.

The protein resides in the endoplasmic reticulum membrane. The catalysed reaction is ADP(in) + ATP(out) = ADP(out) + ATP(in). It catalyses the reaction UDP(out) + ATP(in) = UDP(in) + ATP(out). The enzyme catalyses UTP(out) + ATP(in) = UTP(in) + ATP(out). It carries out the reaction dATP(out) + ATP(in) = dATP(in) + ATP(out). In terms of biological role, ATP:ADP antiporter that catalyzes the exchange of ATP and ADP across the endoplasmic reticulum (ER) membrane. Imports ATP from the cytosol to the ER lumen and exports ADP in the opposite direction. Regulates ER energy metabolism and protein biogenesis. Appears to be part of a calcium-dependent ER to cytosol low energy response axis, where calcium efflux from ER to the cytosol triggers ATP import into the ER lumen to maintain sufficient ATP supply. Provides ATP to ER chaperone HSPA5 that drives protein folding and trafficking in the ER. Can transport dATP, UTP or UDP in exchange for ATP, but the physiological relevance of this process remains to be established. The protein is Solute carrier family 35 member B1 (SLC35B1) of Bos taurus (Bovine).